A 181-amino-acid polypeptide reads, in one-letter code: dTDP-4-dehydrorhamnose 3,5-epimerase (181 aa).

Residues Arg-23, Glu-28, 47–49 (QDN), and Arg-59 contribute to the substrate site. Residue His-62 is the Proton acceptor of the active site. Substrate-binding residues include Lys-71 and His-118. Catalysis depends on Tyr-131, which acts as the Proton donor. Positions 142 and 167 each coordinate substrate.

It belongs to the dTDP-4-dehydrorhamnose 3,5-epimerase family. Homodimer.

It carries out the reaction dTDP-4-dehydro-6-deoxy-alpha-D-glucose = dTDP-4-dehydro-beta-L-rhamnose. The protein operates within carbohydrate biosynthesis; dTDP-L-rhamnose biosynthesis. It participates in bacterial outer membrane biogenesis; lipopolysaccharide biosynthesis. Its function is as follows. Catalyzes the epimerization of the C3' and C5'positions of dTDP-6-deoxy-D-xylo-4-hexulose, forming dTDP-6-deoxy-L-lyxo-4-hexulose. This Pseudomonas aeruginosa (strain ATCC 15692 / DSM 22644 / CIP 104116 / JCM 14847 / LMG 12228 / 1C / PRS 101 / PAO1) protein is dTDP-4-dehydrorhamnose 3,5-epimerase (rmlC).